We begin with the raw amino-acid sequence, 438 residues long: Na(+)/H(+) antiporter NhaA (438 aa).

Transmembrane regions (helical) follow at residues 23–43 (FGGI…NSFL), 62–82 (FFIG…LFFL), 104–124 (SFPV…YFFL), 133–153 (GFGI…MLLG), 162–182 (VFLI…IALF), 185–205 (TNLK…LAVL), 221–241 (VLLW…AVIL), 302–322 (FLAP…NAGV), 337–357 (LGVI…ITFI), 372–392 (WWHI…SMFI), and 410–430 (IAIL…LFAL).

The protein belongs to the NhaA Na(+)/H(+) (TC 2.A.33) antiporter family.

Its subcellular location is the cell inner membrane. The catalysed reaction is Na(+)(in) + 2 H(+)(out) = Na(+)(out) + 2 H(+)(in). Na(+)/H(+) antiporter that extrudes sodium in exchange for external protons. This chain is Na(+)/H(+) antiporter NhaA, found in Helicobacter pylori (strain HPAG1).